The primary structure comprises 722 residues: Inactive serine protease PAMR1 (722 aa).

The signal sequence occupies residues Met1–Ala21. Asn98 is a glycosylation site (N-linked (GlcNAc...) asparagine). Intrachain disulfides connect Cys130/Cys152, Cys179/Cys201, Cys241/Cys252, Cys246/Cys262, Cys264/Cys273, Cys282/Cys331, Cys317/Cys344, and Cys416/Cys444. Residues Cys130 to Val238 form the CUB domain. The 38-residue stretch at Glu237–Glu274 folds into the EGF-like domain. 2 Sushi domains span residues Lys280 to Lys346 and Lys393 to Pro446. N-linked (GlcNAc...) asparagine glycosylation is present at Asn318. Residues Ile447–Lys722 form the Peptidase S1 domain. An N-linked (GlcNAc...) asparagine glycan is attached at Asn455. A disulfide bond links Cys491 and Cys507. N-linked (GlcNAc...) asparagine glycosylation occurs at Asn616. Disulfide bonds link Cys632–Cys651 and Cys663–Cys699.

The protein belongs to the peptidase S1 family.

The protein localises to the secreted. May play a role in regeneration of skeletal muscle. This chain is Inactive serine protease PAMR1 (pamr1), found in Xenopus tropicalis (Western clawed frog).